We begin with the raw amino-acid sequence, 117 residues long: Large ribosomal subunit protein bL19 (117 aa).

Belongs to the bacterial ribosomal protein bL19 family.

Functionally, this protein is located at the 30S-50S ribosomal subunit interface and may play a role in the structure and function of the aminoacyl-tRNA binding site. The polypeptide is Large ribosomal subunit protein bL19 (Vibrio cholerae serotype O1 (strain ATCC 39541 / Classical Ogawa 395 / O395)).